We begin with the raw amino-acid sequence, 175 residues long: Large ribosomal subunit protein uL18 (175 aa).

This sequence belongs to the universal ribosomal protein uL18 family. As to quaternary structure, part of the 50S ribosomal subunit. Contacts the 5S and 23S rRNAs.

In terms of biological role, this is one of the proteins that bind and probably mediate the attachment of the 5S RNA into the large ribosomal subunit, where it forms part of the central protuberance. The protein is Large ribosomal subunit protein uL18 of Methanospirillum hungatei JF-1 (strain ATCC 27890 / DSM 864 / NBRC 100397 / JF-1).